A 482-amino-acid polypeptide reads, in one-letter code: Zinc finger protein 223 (482 aa).

A KRAB domain is found at 8-78 (VTFKDVAVVF…DIATQREGNS (71 aa)). 5 consecutive C2H2-type zinc fingers follow at residues 176 to 198 (HSCD…QRVH), 204 to 226 (FKCD…QRVH), 232 to 254 (FKCE…CKLH), 260 to 282 (YNCE…QRIH), and 288 to 310 (FKCE…CVVH). The segment at 316–338 (NSTGEYGKGFIRRLDLCKHQTIH) adopts a C2H2-type 6; degenerate zinc-finger fold. 3 consecutive C2H2-type zinc fingers follow at residues 344–366 (YNCK…QRVH), 372–394 (YKCD…HRAH), and 400–422 (YNCD…KRLH). The C2H2-type 10; degenerate zinc-finger motif lies at 428–450 (FKCEDCGKKLVYRSYRKDQQKNH).

It belongs to the krueppel C2H2-type zinc-finger protein family.

Its subcellular location is the nucleus. Its function is as follows. May be involved in transcriptional regulation. The chain is Zinc finger protein 223 (ZNF223) from Homo sapiens (Human).